Reading from the N-terminus, the 336-residue chain is Aromatic prenyltransferase (336 aa).

It belongs to the aromatic prenyltransferase family.

In terms of biological role, prenyltransferase that attaches isoprenoid moieties to carbon atoms of aromatic substrates in an enzyme-catalyzed Friedel-Crafts reaction. Shows specificity for dimethylallyl diphosphate (DMAPP) and does not accept geranyl diphosphate (GPP) or isopentenyl diphosphate (IPP). Prenylates the artificial substrate 2,7-dihydroxynaphthalene (2,7-DHN), as well as dihydrophenazine-1-carboxylic acid at a lower level. Only traces of products are detected with aspulvinone E, flaviolin, or 4-hydroxybenzoic acid as substrates; and no product is formed with L-tryptophan, L-tyrosine, or 4-hydroxyphenylpyruvate. Ptf seems no to be involved in the prenylation reaction in the biosynthesis of aspulvinone H and J and the physiological function of ptf remains unknown. The protein is Aromatic prenyltransferase of Aspergillus terreus (strain NIH 2624 / FGSC A1156).